Consider the following 54-residue polypeptide: Ribulose bisphosphate carboxylase large chain (54 aa).

Residues 1–2 (MS) constitute a propeptide that is removed on maturation. Pro3 is modified (N-acetylproline). An N6,N6,N6-trimethyllysine modification is found at Lys14.

The protein belongs to the RuBisCO large chain family. Type I subfamily. As to quaternary structure, heterohexadecamer of 8 large chains and 8 small chains.

It localises to the plastid. The protein localises to the chloroplast. It carries out the reaction 2 (2R)-3-phosphoglycerate + 2 H(+) = D-ribulose 1,5-bisphosphate + CO2 + H2O. It catalyses the reaction D-ribulose 1,5-bisphosphate + O2 = 2-phosphoglycolate + (2R)-3-phosphoglycerate + 2 H(+). Its function is as follows. RuBisCO catalyzes two reactions: the carboxylation of D-ribulose 1,5-bisphosphate, the primary event in carbon dioxide fixation, as well as the oxidative fragmentation of the pentose substrate in the photorespiration process. Both reactions occur simultaneously and in competition at the same active site. This is Ribulose bisphosphate carboxylase large chain (rbcL) from Magnolia liliiflora (Mulan magnolia).